Consider the following 340-residue polypeptide: Fructoselysine 6-phosphate deglycase (340 aa).

SIS domains lie at 35–169 (IVEE…RLAP) and 201–331 (LGEL…PDER).

As to quaternary structure, homododecamer.

It carries out the reaction N(6)-(6-phospho-D-fructosyl)-L-lysine + H2O = D-glucose 6-phosphate + L-lysine. It functions in the pathway carbohydrate metabolism; fructoselysine degradation; D-glucose 6-phosphate and lysine from fructoselysine: step 2/2. With respect to regulation, strongly inhibited by ZnCl(2). Catalyzes the reversible conversion of fructoselysine 6-phosphate to glucose 6-phosphate and lysine. Functions in a fructoselysine degradation pathway that allows E.coli to grow on fructoselysine or psicoselysine. The protein is Fructoselysine 6-phosphate deglycase of Escherichia coli (strain K12).